Reading from the N-terminus, the 193-residue chain is Peptidyl-tRNA hydrolase (193 aa).

Y17 contributes to the tRNA binding site. H22 functions as the Proton acceptor in the catalytic mechanism. TRNA is bound by residues Y68, N70, and N116.

This sequence belongs to the PTH family. In terms of assembly, monomer.

It is found in the cytoplasm. The catalysed reaction is an N-acyl-L-alpha-aminoacyl-tRNA + H2O = an N-acyl-L-amino acid + a tRNA + H(+). In terms of biological role, hydrolyzes ribosome-free peptidyl-tRNAs (with 1 or more amino acids incorporated), which drop off the ribosome during protein synthesis, or as a result of ribosome stalling. Functionally, catalyzes the release of premature peptidyl moieties from peptidyl-tRNA molecules trapped in stalled 50S ribosomal subunits, and thus maintains levels of free tRNAs and 50S ribosomes. The sequence is that of Peptidyl-tRNA hydrolase from Acinetobacter baumannii (strain AB307-0294).